The sequence spans 195 residues: Imidazoleglycerol-phosphate dehydratase (195 aa).

It belongs to the imidazoleglycerol-phosphate dehydratase family.

It is found in the cytoplasm. It catalyses the reaction D-erythro-1-(imidazol-4-yl)glycerol 3-phosphate = 3-(imidazol-4-yl)-2-oxopropyl phosphate + H2O. Its pathway is amino-acid biosynthesis; L-histidine biosynthesis; L-histidine from 5-phospho-alpha-D-ribose 1-diphosphate: step 6/9. The polypeptide is Imidazoleglycerol-phosphate dehydratase (Roseobacter denitrificans (strain ATCC 33942 / OCh 114) (Erythrobacter sp. (strain OCh 114))).